We begin with the raw amino-acid sequence, 142 residues long: Ninjurin-2 (142 aa).

The segment at 1 to 21 (MESARENIDLQPGSSDPRSQP) is disordered. Residues 1–60 (MESARENIDLQPGSSDPRSQPINLNHYATKKSVAESMLDVALFMSNAMRLKAVLEQGPSS) lie on the Extracellular side of the membrane. Positions 12-21 (PGSSDPRSQP) are enriched in polar residues. The segment at 25 to 37 (NHYATKKSVAESM) is helix alpha1. The tract at residues 38-57 (LDVALFMSNAMRLKAVLEQG) is helix alpha2. Residues 61 to 92 (HYYTTLVTLISLSLLLQVVIGVLLVVIARLNL) form a helical membrane-spanning segment. Over 93 to 96 (NEVE) the chain is Cytoplasmic. Residues 97–126 (KQWRLNQLNNAATILVFFTVVINVFITAFG) traverse the membrane as a helical segment. Gln-103 is a binding site for cholesterol. At 127–142 (AHKTGFLAARASRNPL) the chain is on the extracellular side.

The protein belongs to the ninjurin family. As to quaternary structure, homooligomer; in response to stimuli, homooligomerizes into filaments. In contrast to NINJ1, the filament is curved toward the intracellular space, preventing its circularization on a relatively flat membrane to mediate plasma membrane rupture: curvature is caused by cholesterol-binding at the cytoplasmic leaflet. In terms of tissue distribution, widely expressed. In adult, higher expression in the bone marrow and peripheral blood lymphocytes, medium in the lung, lymph node, thyroid, uterus, thymus, spleen, prostate and skeletal muscle, lower in the liver, placenta, brain, heart and kidney. In embryo, higher expression in the thymus, heart and liver, lower in the spleen, lung, brain and kidney.

It localises to the cell membrane. Functionally, its role in unclear. In contrast to NINJ1 paralog, does not mediate plasma membrane rupture (cytolysis) downstream of necroptotic and pyroptotic programmed cell death. While it is able to oligomerize and form filaments, filaments are curved toward the intracellular space, preventing circularization to mediate plasma membrane rupture. May act as a homophilic transmembrane adhesion molecule involved in nerve regeneration. Promotes axonal growth. The polypeptide is Ninjurin-2 (Homo sapiens (Human)).